Consider the following 148-residue polypeptide: Ubiquitin-conjugating enzyme E2 11 (148 aa).

The UBC core domain occupies 1–147; it reads MASKRILKEL…ARSWTQKYAM (147 aa). The active-site Glycyl thioester intermediate is the cysteine 85.

The protein belongs to the ubiquitin-conjugating enzyme family. Interacts with the E3 ubiquitin-protein ligases MBR1 and MBR2. In terms of tissue distribution, ubiquitously expressed. Mainly in petals.

It carries out the reaction S-ubiquitinyl-[E1 ubiquitin-activating enzyme]-L-cysteine + [E2 ubiquitin-conjugating enzyme]-L-cysteine = [E1 ubiquitin-activating enzyme]-L-cysteine + S-ubiquitinyl-[E2 ubiquitin-conjugating enzyme]-L-cysteine.. It functions in the pathway protein modification; protein ubiquitination. Accepts the ubiquitin from the E1 complex and catalyzes its covalent attachment to other proteins. Mediates the selective degradation of short-lived and abnormal proteins. The polypeptide is Ubiquitin-conjugating enzyme E2 11 (UBC11) (Arabidopsis thaliana (Mouse-ear cress)).